Consider the following 513-residue polypeptide: ATP synthase subunit alpha (513 aa).

169–176 serves as a coordination point for ATP; the sequence is GDRQTGKT.

Belongs to the ATPase alpha/beta chains family. F-type ATPases have 2 components, CF(1) - the catalytic core - and CF(0) - the membrane proton channel. CF(1) has five subunits: alpha(3), beta(3), gamma(1), delta(1), epsilon(1). CF(0) has three main subunits: a(1), b(2) and c(9-12). The alpha and beta chains form an alternating ring which encloses part of the gamma chain. CF(1) is attached to CF(0) by a central stalk formed by the gamma and epsilon chains, while a peripheral stalk is formed by the delta and b chains.

It is found in the cell inner membrane. It catalyses the reaction ATP + H2O + 4 H(+)(in) = ADP + phosphate + 5 H(+)(out). In terms of biological role, produces ATP from ADP in the presence of a proton gradient across the membrane. The alpha chain is a regulatory subunit. This Edwardsiella ictaluri (strain 93-146) protein is ATP synthase subunit alpha.